A 257-amino-acid polypeptide reads, in one-letter code: NAD-capped RNA hydrolase NudC (257 aa).

Positions 27 and 71 each coordinate substrate. The Zn(2+) site is built by C100 and C103. Position 113 (E113) interacts with substrate. Zn(2+) contacts are provided by C118 and C121. Residue Y126 coordinates substrate. A Nudix hydrolase domain is found at 127-251; that stretch reads PQIAPCIIVG…IARRLIEDTI (125 aa). Positions 160, 176, and 180 each coordinate a divalent metal cation. The short motif at 161–182 is the Nudix box element; sequence GFVEVGETLEEAVVREVMEESN. 194 to 201 contributes to the substrate binding site; the sequence is QPWPFPHS. E221 contributes to the a divalent metal cation binding site. Position 243 (A243) interacts with substrate.

It belongs to the Nudix hydrolase family. NudC subfamily. In terms of assembly, homodimer. The cofactor is Mg(2+). It depends on Mn(2+) as a cofactor. Zn(2+) is required as a cofactor.

It carries out the reaction a 5'-end NAD(+)-phospho-ribonucleoside in mRNA + H2O = a 5'-end phospho-adenosine-phospho-ribonucleoside in mRNA + beta-nicotinamide D-ribonucleotide + 2 H(+). The catalysed reaction is NAD(+) + H2O = beta-nicotinamide D-ribonucleotide + AMP + 2 H(+). It catalyses the reaction NADH + H2O = reduced beta-nicotinamide D-ribonucleotide + AMP + 2 H(+). MRNA decapping enzyme that specifically removes the nicotinamide adenine dinucleotide (NAD) cap from a subset of mRNAs by hydrolyzing the diphosphate linkage to produce nicotinamide mononucleotide (NMN) and 5' monophosphate mRNA. The NAD-cap is present at the 5'-end of some mRNAs and stabilizes RNA against 5'-processing. Has preference for mRNAs with a 5'-end purine. Catalyzes the hydrolysis of a broad range of dinucleotide pyrophosphates. This is NAD-capped RNA hydrolase NudC from Photorhabdus laumondii subsp. laumondii (strain DSM 15139 / CIP 105565 / TT01) (Photorhabdus luminescens subsp. laumondii).